We begin with the raw amino-acid sequence, 880 residues long: Interference hedgehog (880 aa).

An N-terminal signal peptide occupies residues 1–20 (MTLLTSSLLFFSLLTSRLEA). Topologically, residues 21–703 (IPVLEKSPAH…ETFNMSPMLT (683 aa)) are extracellular. Ig-like C2-type domains are found at residues 45–142 (PGVR…IARL), 132–234 (PLVV…IQLT), 252–340 (PHLL…YIKV), and 346–432 (PQIV…LQVN). 4 disulfide bridges follow: C68-C126, C173-C220, C276-C324, and C367-C414. Residues N102 and N209 are each glycosylated (N-linked (GlcNAc...) asparagine). Residues 426 to 467 (GTLLQVNPKQIQEPRESGGTHRPKPNQGSKQKQMYPPTPPNV) are disordered. 2 Fibronectin type-III domains span residues 461 to 567 (PPTP…LQPG) and 575 to 670 (VPEL…TQRP). A glycan (N-linked (GlcNAc...) asparagine) is linked at N466. Residues R497, K501, K503, and R541 each coordinate heparin. Residue N557 is glycosylated (N-linked (GlcNAc...) asparagine). Residues 662-697 (LKQGRTQRPKTSTTEEPTLQMGDRDTTTPSHNETFN) are disordered. Polar residues-rich tracts occupy residues 665–678 (GRTQRPKTSTTEEP) and 688–697 (TTPSHNETFN). An N-linked (GlcNAc...) asparagine glycan is attached at N693. A helical membrane pass occupies residues 704-724 (GTIGGGAVLILLLISTCLCVC). Topologically, residues 725–880 (RRRSSRSRGN…SSGSLNSVGV (156 aa)) are cytoplasmic. Disordered stretches follow at residues 728–762 (SSRSRGNNPNKPRMAELRDDFVPLGNCSPTKQRQR) and 775–880 (QQQQ…SVGV). 2 stretches are compositionally biased toward low complexity: residues 823 to 837 (RAGGSNGSNNGNNNN) and 864 to 880 (SSRSENLSSGSLNSVGV).

Belongs to the immunoglobulin superfamily. IHOG family. As to quaternary structure, homodimer. Heterotetramer; 2 iHog chains bind 2 hh chains when facilitated by heparin, heparin is required to promote high-affinity interactions between hh and iHog.

Its subcellular location is the membrane. Mediates response to the active Hedgehog (Hh) protein signal in embryos, functioning upstream or at the level of patched (ptc). This chain is Interference hedgehog, found in Drosophila yakuba (Fruit fly).